The sequence spans 532 residues: uncharacterized protein (532 aa).

13 helical membrane passes run 13–33 (MSLL…QTLL), 53–73 (WLTT…AFLI), 80–100 (SLFL…GIAP), 111–131 (IQAV…LLIF), 142–162 (IFGL…GWII), 169–189 (IMFY…FFIF), 203–223 (LGAI…SEAG), 231–251 (IVLS…VQQL), 273–293 (VINI…PIYL), 306–326 (LLLL…GILF), 334–354 (LAII…QLTI), 361–381 (IMLI…PVMT), and 483–503 (INDA…LSIF).

The protein belongs to the major facilitator superfamily. EmrB family.

It is found in the cell membrane. This is an uncharacterized protein from Bacillus subtilis (strain 168).